The primary structure comprises 942 residues: Exopolysaccharide phosphotransferase SCO2592 (942 aa).

This sequence belongs to the stealth family.

The protein is Exopolysaccharide phosphotransferase SCO2592 of Streptomyces coelicolor (strain ATCC BAA-471 / A3(2) / M145).